Consider the following 114-residue polypeptide: Large ribosomal subunit protein uL18 (114 aa).

Belongs to the universal ribosomal protein uL18 family. As to quaternary structure, part of the 50S ribosomal subunit; part of the 5S rRNA/L5/L18/L25 subcomplex. Contacts the 5S and 23S rRNAs.

In terms of biological role, this is one of the proteins that bind and probably mediate the attachment of the 5S RNA into the large ribosomal subunit, where it forms part of the central protuberance. The protein is Large ribosomal subunit protein uL18 of Aster yellows phytoplasma.